The following is a 425-amino-acid chain: UDP-N-acetylglucosamine 1-carboxyvinyltransferase (425 aa).

Phosphoenolpyruvate is bound at residue K31–N32. R100 contacts UDP-N-acetyl-alpha-D-glucosamine. C124 functions as the Proton donor in the catalytic mechanism. 2-(S-cysteinyl)pyruvic acid O-phosphothioketal is present on C124. UDP-N-acetyl-alpha-D-glucosamine-binding positions include R129–Q133, T170–T172, D311, and I333.

Belongs to the EPSP synthase family. MurA subfamily.

The protein resides in the cytoplasm. It carries out the reaction phosphoenolpyruvate + UDP-N-acetyl-alpha-D-glucosamine = UDP-N-acetyl-3-O-(1-carboxyvinyl)-alpha-D-glucosamine + phosphate. Its pathway is cell wall biogenesis; peptidoglycan biosynthesis. Its function is as follows. Cell wall formation. Adds enolpyruvyl to UDP-N-acetylglucosamine. This Aquifex aeolicus (strain VF5) protein is UDP-N-acetylglucosamine 1-carboxyvinyltransferase.